The primary structure comprises 366 residues: Methylthioribose-1-phosphate isomerase (366 aa).

Residues 53-55 (RGA), arginine 90, and glutamine 203 each bind substrate. Aspartate 244 acts as the Proton donor in catalysis. 254-255 (NK) contributes to the substrate binding site.

The protein belongs to the eIF-2B alpha/beta/delta subunits family. MtnA subfamily.

It carries out the reaction 5-(methylsulfanyl)-alpha-D-ribose 1-phosphate = 5-(methylsulfanyl)-D-ribulose 1-phosphate. The protein operates within amino-acid biosynthesis; L-methionine biosynthesis via salvage pathway; L-methionine from S-methyl-5-thio-alpha-D-ribose 1-phosphate: step 1/6. Its function is as follows. Catalyzes the interconversion of methylthioribose-1-phosphate (MTR-1-P) into methylthioribulose-1-phosphate (MTRu-1-P). In Methylocella silvestris (strain DSM 15510 / CIP 108128 / LMG 27833 / NCIMB 13906 / BL2), this protein is Methylthioribose-1-phosphate isomerase.